A 143-amino-acid chain; its full sequence is Large ribosomal subunit protein uL13 (143 aa).

This sequence belongs to the universal ribosomal protein uL13 family. Part of the 50S ribosomal subunit.

In terms of biological role, this protein is one of the early assembly proteins of the 50S ribosomal subunit, although it is not seen to bind rRNA by itself. It is important during the early stages of 50S assembly. The polypeptide is Large ribosomal subunit protein uL13 (Dehalococcoides mccartyi (strain CBDB1)).